The sequence spans 440 residues: Protein TENP (440 aa).

In terms of tissue distribution, expressed in developing retina and brain, but not in heart, liver or kidney. In brain, located in a narrow strip in the boundary between the ventricular zone (consisting of proliferating cells) and the intermediate zone (consisting of postmitotic, differentiating cells). Expressed in all major regions of the developing brain, including the myelencephalon, the mesencephalon, the telencephalon and the diencephalon. In the developing retina, expression is scattered across the retinal neural epithelium. Expressed in egg white (at protein level). Expressed in the magnum of the oviduct (at protein level).

In terms of biological role, may play a role in the developmental transition from cell proliferation to cell differentiation during neurogenesis. This is Protein TENP (TENP) from Gallus gallus (Chicken).